A 71-amino-acid polypeptide reads, in one-letter code: Small ribosomal subunit protein bS21 (71 aa).

It belongs to the bacterial ribosomal protein bS21 family.

In Photobacterium profundum (strain SS9), this protein is Small ribosomal subunit protein bS21.